A 204-amino-acid chain; its full sequence is Proteasome subunit beta type-3 (204 aa).

Belongs to the peptidase T1B family. The 26S proteasome consists of a 20S proteasome core and two 19S regulatory subunits. The 20S proteasome core is composed of 28 subunits that are arranged in four stacked rings, resulting in a barrel-shaped structure. The two end rings are each formed by seven alpha subunits, and the two central rings are each formed by seven beta subunits. The catalytic chamber with the active sites is on the inside of the barrel.

Its subcellular location is the cytoplasm. It localises to the nucleus. Non-catalytic component of the proteasome, a multicatalytic proteinase complex which is characterized by its ability to cleave peptides with Arg, Phe, Tyr, Leu, and Glu adjacent to the leaving group at neutral or slightly basic pH. The proteasome has an ATP-dependent proteolytic activity. The chain is Proteasome subunit beta type-3 (PBC1) from Picea mariana (Black spruce).